A 73-amino-acid chain; its full sequence is Small ribosomal subunit protein bS18c (73 aa).

It belongs to the bacterial ribosomal protein bS18 family. In terms of assembly, part of the 30S ribosomal subunit.

The protein resides in the plastid. The protein localises to the chloroplast. The chain is Small ribosomal subunit protein bS18c from Nephroselmis olivacea (Green alga).